A 119-amino-acid chain; its full sequence is Large ribosomal subunit protein uL18 (119 aa).

It belongs to the universal ribosomal protein uL18 family. In terms of assembly, part of the 50S ribosomal subunit; part of the 5S rRNA/L5/L18/L25 subcomplex. Contacts the 5S and 23S rRNAs.

Its function is as follows. This is one of the proteins that bind and probably mediate the attachment of the 5S RNA into the large ribosomal subunit, where it forms part of the central protuberance. In Mycoplasmoides gallisepticum (strain R(low / passage 15 / clone 2)) (Mycoplasma gallisepticum), this protein is Large ribosomal subunit protein uL18.